The sequence spans 374 residues: MKYLLPSAAAGLLLLAAQPTMAANTGGYATTDGGDVAGAVKKTARSMQDIIDIIEAAKLDSNGKKVKGGAYPLVITYNGNEDALIKAAEANICGQWSKDARGVEIKEFTKGITIIGTNGSSANFGIWLTKSSDIVIRNMRFGYMPGGAQDGDAIRIDNTPNVWIDHNEIFAKNFECAGTKDGDTTFESAIDIKKASTNVTISYNYIHGIKKVGLSGFSSSDTGRDLTYHHNIYDDVNARLPLQRGGQVHAYNNLYTGITSSGLNVRQKGIALIERNWFENAKNPVTSRYDGSNFGTWELRNNNVMSPADFAKYNITWDKDSKPYVNAEDWKSTGTFASVPYSYSPVSAQCVKDKLANYAGVNKNLAVLTAANCN.

The N-terminal stretch at 1–22 is a signal peptide; that stretch reads MKYLLPSAAAGLLLLAAQPTMA. Cysteines 93 and 176 form a disulfide. D150, D152, E187, and D191 together coordinate Ca(2+). R239 is an active-site residue. C350 and C373 are disulfide-bonded.

It belongs to the polysaccharide lyase 1 family. PLADES subfamily. Requires Ca(2+) as cofactor.

The protein resides in the secreted. The enzyme catalyses Eliminative cleavage of (1-&gt;4)-alpha-D-galacturonan to give oligosaccharides with 4-deoxy-alpha-D-galact-4-enuronosyl groups at their non-reducing ends.. It participates in glycan metabolism; pectin degradation; 2-dehydro-3-deoxy-D-gluconate from pectin: step 2/5. Functionally, involved in maceration and soft-rotting of plant tissue. This Pectobacterium carotovorum (Erwinia carotovora) protein is Pectate lyase 3 (pel3).